The primary structure comprises 337 residues: Cytidine deaminase 2 (337 aa).

2 consecutive CMP/dCMP-type deaminase domains span residues 43-164 and 199-320; these read TDPI…FSSL and LDCS…LKYL. Residue 84–86 participates in substrate binding; the sequence is NVD. Position 97 (His-97) interacts with Zn(2+). Glu-99 (proton donor) is an active-site residue. Positions 132 and 135 each coordinate Zn(2+).

It belongs to the cytidine and deoxycytidylate deaminase family. Homodimer. Zn(2+) is required as a cofactor.

It catalyses the reaction cytidine + H2O + H(+) = uridine + NH4(+). It carries out the reaction 2'-deoxycytidine + H2O + H(+) = 2'-deoxyuridine + NH4(+). In terms of biological role, this enzyme scavenges exogenous and endogenous cytidine and 2'-deoxycytidine for UMP synthesis. In Arabidopsis thaliana (Mouse-ear cress), this protein is Cytidine deaminase 2 (CDA2).